A 452-amino-acid polypeptide reads, in one-letter code: Lichenan permease IIC component (452 aa).

A PTS EIIC type-3 domain is found at Leu-8–Phe-421. A run of 10 helical transmembrane segments spans residues Gly-31–Leu-51, Leu-72–Ala-92, Leu-104–Phe-124, Gly-138–Val-158, Phe-187–Val-207, Ile-218–Leu-238, Leu-246–Trp-266, Phe-291–Met-311, Leu-351–Gly-373, and Ser-402–Phe-422.

The protein localises to the cell membrane. Its function is as follows. The phosphoenolpyruvate-dependent sugar phosphotransferase system (PTS), a major carbohydrate active -transport system, catalyzes the phosphorylation of incoming sugar substrates concomitant with their translocation across the cell membrane. This system is involved in lichenan transport. This chain is Lichenan permease IIC component (licC), found in Bacillus subtilis (strain 168).